A 433-amino-acid chain; its full sequence is tRNA-2-methylthio-N(6)-dimethylallyladenosine synthase (433 aa).

Positions 4–119 constitute an MTTase N-terminal domain; it reads KKLFIQTLGC…ITQAIKTPKF (116 aa). The [4Fe-4S] cluster site is built by C13, C50, C82, C151, C155, and C158. The region spanning 137-370 is the Radical SAM core domain; sequence RNSIYKSYIN…QNRHSEILDE (234 aa). Residues 373–433 form the TRAM domain; that stretch reads KKQENKTFKV…KRMVLYGEII (61 aa).

The protein belongs to the methylthiotransferase family. MiaB subfamily. In terms of assembly, monomer. [4Fe-4S] cluster serves as cofactor.

Its subcellular location is the cytoplasm. The catalysed reaction is N(6)-dimethylallyladenosine(37) in tRNA + (sulfur carrier)-SH + AH2 + 2 S-adenosyl-L-methionine = 2-methylsulfanyl-N(6)-dimethylallyladenosine(37) in tRNA + (sulfur carrier)-H + 5'-deoxyadenosine + L-methionine + A + S-adenosyl-L-homocysteine + 2 H(+). Functionally, catalyzes the methylthiolation of N6-(dimethylallyl)adenosine (i(6)A), leading to the formation of 2-methylthio-N6-(dimethylallyl)adenosine (ms(2)i(6)A) at position 37 in tRNAs that read codons beginning with uridine. The chain is tRNA-2-methylthio-N(6)-dimethylallyladenosine synthase from Campylobacter jejuni subsp. doylei (strain ATCC BAA-1458 / RM4099 / 269.97).